We begin with the raw amino-acid sequence, 181 residues long: MIPLAIKIGITGPVGSIKSEALQKIIDMLKNDNLNVQGVLVSKVTNNGKLTGYTIEDIESKRKAQFCFDNFVSRVKIDKLGVDTKILEEILIPSLQKARETADVIVIDEIGKLENTTKKVHAEIEETLKCGKPLIVTLHKRSRNPVLQEIKSLEGVRVFDITPINKNILPFKVMHVLKGEE.

Residues Gly12 to Ser19 and Val104 to Gly111 contribute to the ATP site.

Belongs to the THEP1 NTPase family.

It carries out the reaction a ribonucleoside 5'-triphosphate + H2O = a ribonucleoside 5'-diphosphate + phosphate + H(+). Functionally, has nucleotide phosphatase activity towards ATP, GTP, CTP, TTP and UTP. May hydrolyze nucleoside diphosphates with lower efficiency. In Thermoplasma acidophilum (strain ATCC 25905 / DSM 1728 / JCM 9062 / NBRC 15155 / AMRC-C165), this protein is Nucleoside-triphosphatase THEP1.